Reading from the N-terminus, the 175-residue chain is Co-chaperone protein HscB homolog (175 aa).

The J domain occupies 2-74 (NYFQLFNIEV…LQRAEYILVQ (73 aa)).

Belongs to the HscB family. As to quaternary structure, interacts with HscA and stimulates its ATPase activity.

Co-chaperone involved in the maturation of iron-sulfur cluster-containing proteins. Seems to help targeting proteins to be folded toward HscA. The polypeptide is Co-chaperone protein HscB homolog (Colwellia psychrerythraea (strain 34H / ATCC BAA-681) (Vibrio psychroerythus)).